Here is a 181-residue protein sequence, read N- to C-terminus: Small ribosomal subunit protein uS4 (181 aa).

Residues 106–168 (RRLQTLVYRK…PTSRIVKAKV (63 aa)) enclose the S4 RNA-binding domain.

The protein belongs to the universal ribosomal protein uS4 family. In terms of assembly, part of the 30S ribosomal subunit. Contacts protein S5. The interaction surface between S4 and S5 is involved in control of translational fidelity.

In terms of biological role, one of the primary rRNA binding proteins, it binds directly to 16S rRNA where it nucleates assembly of the body of the 30S subunit. With S5 and S12 plays an important role in translational accuracy. This Caldivirga maquilingensis (strain ATCC 700844 / DSM 13496 / JCM 10307 / IC-167) protein is Small ribosomal subunit protein uS4.